An 852-amino-acid polypeptide reads, in one-letter code: Alanine--tRNA ligase (852 aa).

The Zn(2+) site is built by His-554, His-558, Cys-656, and His-660.

Belongs to the class-II aminoacyl-tRNA synthetase family. Zn(2+) is required as a cofactor.

The protein resides in the cytoplasm. It carries out the reaction tRNA(Ala) + L-alanine + ATP = L-alanyl-tRNA(Ala) + AMP + diphosphate. Functionally, catalyzes the attachment of alanine to tRNA(Ala) in a two-step reaction: alanine is first activated by ATP to form Ala-AMP and then transferred to the acceptor end of tRNA(Ala). Also edits incorrectly charged Ser-tRNA(Ala) and Gly-tRNA(Ala) via its editing domain. The protein is Alanine--tRNA ligase of Campylobacter curvus (strain 525.92).